The following is a 560-amino-acid chain: Eukaryotic translation initiation factor 3 subunit D-1 (560 aa).

Positions 98–166 are disordered; it reads VQKPPHQRGR…RGPPPKMRES (69 aa). The segment covering 100–121 has biased composition (basic residues); it reads KPPHQRGRFRNMRNSRSGRGRN. Position 128 is a phosphothreonine (T128). The segment covering 147-156 has biased composition (basic residues); the sequence is GRGMGKKFGH. The tract at residues 291 to 305 is RNA gate; sequence EFDLLTVNESSVEPP.

The protein belongs to the eIF-3 subunit D family. Component of the eukaryotic translation initiation factor 3 (eIF-3) complex. The eIF-3 complex interacts with pix.

Its subcellular location is the cytoplasm. In terms of biological role, mRNA cap-binding component of the eukaryotic translation initiation factor 3 (eIF-3) complex, which is involved in protein synthesis of a specialized repertoire of mRNAs and, together with other initiation factors, stimulates binding of mRNA and methionyl-tRNAi to the 40S ribosome. The eIF-3 complex specifically targets and initiates translation of a subset of mRNAs involved in cell proliferation. In the eIF-3 complex, eif3d specifically recognizes and binds the 7-methylguanosine cap of a subset of mRNAs. In Drosophila sechellia (Fruit fly), this protein is Eukaryotic translation initiation factor 3 subunit D-1.